Consider the following 139-residue polypeptide: Sec-independent protein translocase protein TatB (139 aa).

A helical transmembrane segment spans residues 1 to 21 (MFDIGFTELLLVGLVALMVLG). The tract at residues 69–139 (LDLEREMKQS…PLRSDRPSEP (71 aa)) is disordered. Residues 80–95 (MPPPASNPAATPPSPP) are compositionally biased toward pro residues.

This sequence belongs to the TatB family. As to quaternary structure, the Tat system comprises two distinct complexes: a TatABC complex, containing multiple copies of TatA, TatB and TatC subunits, and a separate TatA complex, containing only TatA subunits. Substrates initially bind to the TatABC complex, which probably triggers association of the separate TatA complex to form the active translocon.

It is found in the cell inner membrane. Part of the twin-arginine translocation (Tat) system that transports large folded proteins containing a characteristic twin-arginine motif in their signal peptide across membranes. Together with TatC, TatB is part of a receptor directly interacting with Tat signal peptides. TatB may form an oligomeric binding site that transiently accommodates folded Tat precursor proteins before their translocation. The chain is Sec-independent protein translocase protein TatB from Stutzerimonas stutzeri (strain A1501) (Pseudomonas stutzeri).